A 161-amino-acid chain; its full sequence is Methylated-DNA--protein-cysteine methyltransferase (161 aa).

Residue Cys128 is the Nucleophile; methyl group acceptor of the active site.

Belongs to the MGMT family.

It is found in the cytoplasm. It catalyses the reaction a 6-O-methyl-2'-deoxyguanosine in DNA + L-cysteinyl-[protein] = S-methyl-L-cysteinyl-[protein] + a 2'-deoxyguanosine in DNA. The catalysed reaction is a 4-O-methyl-thymidine in DNA + L-cysteinyl-[protein] = a thymidine in DNA + S-methyl-L-cysteinyl-[protein]. Functionally, involved in the cellular defense against the biological effects of O6-methylguanine (O6-MeG) and O4-methylthymine (O4-MeT) in DNA. Repairs the methylated nucleobase in DNA by stoichiometrically transferring the methyl group to a cysteine residue in the enzyme. This is a suicide reaction: the enzyme is irreversibly inactivated. The sequence is that of Methylated-DNA--protein-cysteine methyltransferase from Methanocaldococcus vulcanius (strain ATCC 700851 / DSM 12094 / M7) (Methanococcus vulcanius).